A 481-amino-acid polypeptide reads, in one-letter code: Glutamate--tRNA ligase (481 aa).

The 'HIGH' region signature appears at 28 to 38; the sequence is PSPTGFLHLGG. Positions 139-148 are enriched in basic and acidic residues; it reads RYDGTWRPEP. Residues 139–159 form a disordered region; that stretch reads RYDGTWRPEPGKTLPPVPADR. A 'KMSKS' region motif is present at residues 260-264; it reads KLSKR. Lys263 is a binding site for ATP.

It belongs to the class-I aminoacyl-tRNA synthetase family. Glutamate--tRNA ligase type 1 subfamily. In terms of assembly, monomer.

Its subcellular location is the cytoplasm. The enzyme catalyses tRNA(Glu) + L-glutamate + ATP = L-glutamyl-tRNA(Glu) + AMP + diphosphate. Functionally, catalyzes the attachment of glutamate to tRNA(Glu) in a two-step reaction: glutamate is first activated by ATP to form Glu-AMP and then transferred to the acceptor end of tRNA(Glu). The polypeptide is Glutamate--tRNA ligase (Bordetella bronchiseptica (strain ATCC BAA-588 / NCTC 13252 / RB50) (Alcaligenes bronchisepticus)).